The sequence spans 204 residues: V-set and transmembrane domain-containing protein 2-like protein (204 aa).

A signal peptide spans 1 to 24 (MGAPLAVALGALHYLALFLQLGGA). In terms of domain architecture, Ig-like spans 41-158 (ALFTETPHDM…DGKARHHKVK (118 aa)). A disulfide bridge connects residues Cys62 and Cys142. Residues 168–204 (NSVLHLPEAPPAAPAPPPPKPGKELRKRSVDQEACSL) form a disordered region. Residues 175-187 (EAPPAAPAPPPPK) show a composition bias toward pro residues. Positions 188–198 (PGKELRKRSVD) are enriched in basic and acidic residues.

The sequence is that of V-set and transmembrane domain-containing protein 2-like protein (VSTM2L) from Homo sapiens (Human).